The following is a 606-amino-acid chain: NADH-ubiquinone oxidoreductase chain 5 (606 aa).

The next 16 helical transmembrane spans lie at 4–24 (FPSL…TTTI), 38–58 (NIIS…IHSG), 87–107 (MIFV…SMWY), 114–134 (ITQF…LVTA), 140–160 (LFIG…WWYG), 171–191 (AILY…WFLF), 213–233 (LMGL…HPWL), 241–261 (TPVS…FLLI), 273–293 (VQTF…ICAL), 301–320 (IIAF…IGIN), 325–347 (AFLH…GSII), 366–386 (MPFT…MPFL), 409–429 (LLIT…MIFF), 457–477 (LLIG…PTTI), 488–508 (LTAL…SLAT), and 583–603 (LIKL…LLLM).

Belongs to the complex I subunit 5 family. Core subunit of respiratory chain NADH dehydrogenase (Complex I) which is composed of 45 different subunits.

It localises to the mitochondrion inner membrane. It catalyses the reaction a ubiquinone + NADH + 5 H(+)(in) = a ubiquinol + NAD(+) + 4 H(+)(out). Functionally, core subunit of the mitochondrial membrane respiratory chain NADH dehydrogenase (Complex I) which catalyzes electron transfer from NADH through the respiratory chain, using ubiquinone as an electron acceptor. Essential for the catalytic activity and assembly of complex I. In Ceratotherium simum (White rhinoceros), this protein is NADH-ubiquinone oxidoreductase chain 5 (MT-ND5).